Here is a 91-residue protein sequence, read N- to C-terminus: Small ribosomal subunit protein bS18 (91 aa).

This sequence belongs to the bacterial ribosomal protein bS18 family. As to quaternary structure, part of the 30S ribosomal subunit. Forms a tight heterodimer with protein bS6.

In terms of biological role, binds as a heterodimer with protein bS6 to the central domain of the 16S rRNA, where it helps stabilize the platform of the 30S subunit. This Wolbachia sp. subsp. Brugia malayi (strain TRS) protein is Small ribosomal subunit protein bS18.